The following is a 510-amino-acid chain: Maturase K (510 aa).

It belongs to the intron maturase 2 family. MatK subfamily.

It is found in the plastid. The protein resides in the chloroplast. In terms of biological role, usually encoded in the trnK tRNA gene intron. Probably assists in splicing its own and other chloroplast group II introns. The polypeptide is Maturase K (Gratiola officinalis (Hedgehyssop)).